Reading from the N-terminus, the 699-residue chain is (E2-independent) E3 ubiquitin-conjugating enzyme FATS (699 aa).

The tract at residues 48-116 (MISSIVISQM…LGIPAPSDER (69 aa)) is required for interaction with p53/TP53. Disordered regions lie at residues 107-134 (LGIPAPSDERGPEAELPPKEERPCGGPR), 443-473 (KPTRHFLPIGDSSPSDDCLSRDLSEPTERRH), and 528-569 (KSED…PARS). 2 stretches are compositionally biased toward basic and acidic residues: residues 113 to 129 (SDERGPEAELPPKEERP) and 460 to 473 (CLSRDLSEPTERRH). Residues 116–224 (RGPEAELPPK…GLCERRKYWV (109 aa)) are required for interaction with HDAC1. Residues 534 to 545 (TPEPSPAAPSPA) show a composition bias toward pro residues. Residues 571–699 (TLQEALEVRK…LDQLLQRNAV (129 aa)) are ALMS motif.

Interacts with HDAC1; the interaction prevents binding of HDAC1 to CDKN1A/p21 and facilitates the acetylation and stabilization of CDKN1A/p21. Interacts with p53/TP53; the interaction inhibits binding of p53/TP53 and MDM2.

Its subcellular location is the cytoplasm. The protein localises to the cytoskeleton. It localises to the microtubule organizing center. The protein resides in the centrosome. In terms of biological role, tumor suppressor that is required to sustain G2/M checkpoint after DNA damage. Acts as a p53/TP53 activator by inhibiting MDM2 binding to p53/TP53 and stimulating non-proteolytic polyubiquitination of p53/TP53. Exhibits ubiquitin ligase (E3) activity and assemble ubiquitin polymers through 'Lys-11'- (K11-), 'Lys-29'- (K29-) and 'Lys-63'- (K63)-linkages, independently of the ubiquitin-conjugating enzyme (E2). Promotes p53/TP53-dependent transcription of CDKN1A/p21, leading to robust checkpoint response. Mediates CDKN1A/p21 protein stability in a ubiquitin-independent manner. Interacts with HDAC1 and prevents binding of HDAC1 to CDKN1A/p21 and facilitates the acetylation and stabilization of CDKN1A/p21. May have a role in the assembly of primary cilia. This chain is (E2-independent) E3 ubiquitin-conjugating enzyme FATS, found in Homo sapiens (Human).